The primary structure comprises 93 residues: MSLKEVITSLKNDFHSINKEIDSMKENNEKQEDKIFQEIKKLKLEMELLRKDNLSFKTTIQSLSDSINSLSSVESTYDSDLYYDDDEYSTIYL.

Residues 2–58 (SLKEVITSLKNDFHSINKEIDSMKENNEKQEDKIFQEIKKLKLEMELLRKDNLSFKT) are a coiled coil.

This sequence belongs to the UPF0521 family.

The sequence is that of UPF0521 protein A from Dictyostelium discoideum (Social amoeba).